Reading from the N-terminus, the 1103-residue chain is MANTKYYPEVSSNANFAAIEREILKFWQDNNIFQKSIDGRNGESEFIFYDGPPFANGLPHYGHLLTGFIKDVYARYQTVKGKKVERRFGWDCHGLPAEMQSEKELGISGRLAITNFGIEKFNAHCRASVMEYASDWEEYVTRQARWVDFKNSYKTMDKNFMESVLWAFKELYNKGLLCESMRVVPYSWACETPLSNFETRLDNSYRERSDKAVTVSFVLRDKLHEIPAFAGMISRESEMTVGGDYQEYRILTWTTTPWTLPSNLAIAVGSDIDYALVPQENICYIIAASSVSKYAKELGLSGEENFEIIKGSQLQGLRYKPLFDYFEHHPNSFKIFDVDFVVEGDGTGVVHMAPGFGEDDQILCESKGISLVCPVDNSGKFTKEIPDLEGVQVFDANDKIIIKLKEQGNWLKTEQYIHNYPHCWRTDTPLIYKAVPSWYVKVTQFKDRMVELNQQINWIPHHVKDNLFGKWLENARDWSISRNRFWGTPLPVWKSDDPKYPRIDVYGSIEELEKDFGVKVTDLHRPFIDKLTRPNPNDPTGKSTMRRIEDVFDCWFESGSMPYGQAHYPFENKEWFEDHFPADFIVEYSAQTRGWFYTLMVLSTALFDRPPFLNCICHGVILDATGQKLSKRLNNYADPLELFDQYGSDALRVTMLSSNIVKGQELLIDKDGKMVFDTLRLFIKPIWSSYHFFTMYANADSLKGEISFASENVLDVYILSKLKIAVSKIEESLDNFDTQTAYHAVLEFFEVLNNWYIRRSRARFWKSEKDTDKQNAYNTLYSCLKTMAIAMSALVPMISEAIYKGLCHCEETSTLSSRDLIAGSSKSINNLNPVVKPRDYTPSVHHNDQISVHLCNYPTLSDFEINHELVATMDNVLDICSNSLFIRSTKNIRVRQPLASITIISKHNNDLKAFENLIKDEINVKSVIYCDDLENYASKKLSINFPMLGKRLPAKMKEIIAASKKGDWKAIAGGLTICGETLNNEEYKLILEPYSHIKGAASFENNSSLLILDLELTAELIEEGYARDIVRFIQQARKDAGFSITDRILIEIISEFDLSEIIYNYGDFITEQTLGEFSKNFTPDYVSKVELEDHPIQLKIKKS.

The short motif at 53 to 63 is the 'HIGH' region element; the sequence is PFANGLPHYGH. A 'KMSKS' region motif is present at residues 628–632; it reads KLSKR. K631 contacts ATP.

The protein belongs to the class-I aminoacyl-tRNA synthetase family. IleS type 2 subfamily. As to quaternary structure, monomer. Zn(2+) serves as cofactor.

The protein localises to the cytoplasm. It catalyses the reaction tRNA(Ile) + L-isoleucine + ATP = L-isoleucyl-tRNA(Ile) + AMP + diphosphate. Functionally, catalyzes the attachment of isoleucine to tRNA(Ile). As IleRS can inadvertently accommodate and process structurally similar amino acids such as valine, to avoid such errors it has two additional distinct tRNA(Ile)-dependent editing activities. One activity is designated as 'pretransfer' editing and involves the hydrolysis of activated Val-AMP. The other activity is designated 'posttransfer' editing and involves deacylation of mischarged Val-tRNA(Ile). The protein is Isoleucine--tRNA ligase of Rickettsia akari (strain Hartford).